A 465-amino-acid polypeptide reads, in one-letter code: Auxin transporter-like protein 3 (465 aa).

Residues 1–52 (MTSEKVETVVAGNYLEMEREEEGSKSTTGKLSKFFWHGGSVYDAWFSCASNQ) lie on the Cytoplasmic side of the membrane. Residues 53–70 (VAQVLLTLPYSFSQLGML) form a helical membrane-spanning segment. The Extracellular segment spans residues 71 to 72 (SG). A helical transmembrane segment spans residues 73–93 (ILFQIFYGLMGSWTAYIISVL). Residues 94–129 (YVEYRTRKEREKVDFRNHVIQWFEVLDGLLGKHWRN) lie on the Cytoplasmic side of the membrane. The chain crosses the membrane as a helical span at residues 130-150 (LGLFFNCTFLLFGSVIQLIAC). Residues 151–165 (ASNIYYINDHLDKRT) are Extracellular-facing. A helical membrane pass occupies residues 166-186 (WTYIFGACCATTVFIPSFHNY). At 187–189 (RIW) the chain is on the cytoplasmic side. A helical membrane pass occupies residues 190 to 210 (SFLGLVMTTYTAWYMTIASIL). The Extracellular portion of the chain corresponds to 211 to 225 (HGQAEDVKHSGPTKL). The chain crosses the membrane as a helical span at residues 226-246 (VLYFTGATNILYTFGGHAVTV). Topologically, residues 247–259 (EIMHAMWKPQKFK) are cytoplasmic. Residues 260 to 280 (MIYLIATLYVMTLTLPSAAAV) traverse the membrane as a helical segment. At 281 to 307 (YWAFGDNLLTHSNALSLLPRTGFRDTA) the chain is on the extracellular side. A helical transmembrane segment spans residues 308-328 (VILMLIHQFITFGFACTPLYF). At 329–349 (VWEKFLGVHETKSLLKRALVR) the chain is on the cytoplasmic side. The helical transmembrane segment at 350–370 (LPVVIPIWFLAIIFPFFGPIN) threads the bilayer. The Extracellular segment spans residues 371–374 (STVG). A helical transmembrane segment spans residues 375–395 (SLLVSFTVYIIPALAHMVTFA). Residues 396-421 (SAPARENAVERPPSFLGGWVGLYSVN) lie on the Cytoplasmic side of the membrane. The helical transmembrane segment at 422-442 (VFVAVWVLVVGFGLGGWASML) threads the bilayer. At 443-465 (NFVHQIKTFGLFAKCFQCPPHKA) the chain is on the extracellular side.

It belongs to the amino acid/polyamine transporter 2 family. Amino acid/auxin permease (AAAP) (TC 2.A.18.1) subfamily. Shoots and roots of nodulating plants. Low levels in roots, nodules, stems, petioles, leaves, shoot apices and flowers.

It is found in the cell membrane. In terms of biological role, carrier protein involved in proton-driven auxin influx. Mediates the formation of auxin gradient from developing leaves (site of auxin biosynthesis) to tips by contributing to the loading of auxin in vascular tissues and facilitating acropetal (base to tip) auxin transport within inner tissues of the root apex, and basipetal (tip to base) auxin transport within outer tissues of the root apex. May be involved in lateral roots and nodules formation. The polypeptide is Auxin transporter-like protein 3 (LAX3) (Medicago truncatula (Barrel medic)).